We begin with the raw amino-acid sequence, 453 residues long: Bifunctional protein GlmU (453 aa).

Positions 1–225 (MNIVILAAGT…EWETLGVNSK (225 aa)) are pyrophosphorylase. UDP-N-acetyl-alpha-D-glucosamine contacts are provided by residues 6-9 (LAAG), Lys20, Gln71, 76-77 (GT), 98-100 (YGD), Gly135, Glu150, Asn165, and Asn223. Residue Asp100 coordinates Mg(2+). Mg(2+) is bound at residue Asn223. The tract at residues 226–246 (AQLAELERIHQRNVADALLVD) is linker. The tract at residues 247–453 (GVTLADPARV…GYVRPVKKKS (207 aa)) is N-acetyltransferase. UDP-N-acetyl-alpha-D-glucosamine contacts are provided by Arg329 and Lys347. His359 acts as the Proton acceptor in catalysis. Positions 362 and 373 each coordinate UDP-N-acetyl-alpha-D-glucosamine. Acetyl-CoA is bound by residues Ala376, 382 to 383 (NY), Ser401, and Ala419.

The protein in the N-terminal section; belongs to the N-acetylglucosamine-1-phosphate uridyltransferase family. It in the C-terminal section; belongs to the transferase hexapeptide repeat family. As to quaternary structure, homotrimer. Requires Mg(2+) as cofactor.

The protein resides in the cytoplasm. The catalysed reaction is alpha-D-glucosamine 1-phosphate + acetyl-CoA = N-acetyl-alpha-D-glucosamine 1-phosphate + CoA + H(+). It carries out the reaction N-acetyl-alpha-D-glucosamine 1-phosphate + UTP + H(+) = UDP-N-acetyl-alpha-D-glucosamine + diphosphate. Its pathway is nucleotide-sugar biosynthesis; UDP-N-acetyl-alpha-D-glucosamine biosynthesis; N-acetyl-alpha-D-glucosamine 1-phosphate from alpha-D-glucosamine 6-phosphate (route II): step 2/2. The protein operates within nucleotide-sugar biosynthesis; UDP-N-acetyl-alpha-D-glucosamine biosynthesis; UDP-N-acetyl-alpha-D-glucosamine from N-acetyl-alpha-D-glucosamine 1-phosphate: step 1/1. It functions in the pathway bacterial outer membrane biogenesis; LPS lipid A biosynthesis. Its function is as follows. Catalyzes the last two sequential reactions in the de novo biosynthetic pathway for UDP-N-acetylglucosamine (UDP-GlcNAc). The C-terminal domain catalyzes the transfer of acetyl group from acetyl coenzyme A to glucosamine-1-phosphate (GlcN-1-P) to produce N-acetylglucosamine-1-phosphate (GlcNAc-1-P), which is converted into UDP-GlcNAc by the transfer of uridine 5-monophosphate (from uridine 5-triphosphate), a reaction catalyzed by the N-terminal domain. The sequence is that of Bifunctional protein GlmU from Burkholderia ambifaria (strain ATCC BAA-244 / DSM 16087 / CCUG 44356 / LMG 19182 / AMMD) (Burkholderia cepacia (strain AMMD)).